The primary structure comprises 419 residues: Hyaluronan synthase (419 aa).

5 consecutive transmembrane segments (helical) span residues 8–28 (LIVL…MYLF), 33–53 (VGIY…LSFL), 318–338 (IVAL…VAIG), 345–365 (AIQL…IVAL), and 376–396 (PASF…LQPL).

This sequence belongs to the NodC/HAS family. Mg(2+) serves as cofactor.

It localises to the cell membrane. It carries out the reaction [hyaluronan](n) + UDP-N-acetyl-alpha-D-glucosamine = N-acetyl-beta-D-glucosaminyl-(1-&gt;4)-[hyaluronan](n) + UDP + H(+). It catalyses the reaction N-acetyl-beta-D-glucosaminyl-(1-&gt;4)-[hyaluronan](n) + UDP-alpha-D-glucuronate = [hyaluronan](n+1) + UDP + H(+). It participates in glycan biosynthesis; hyaluronan biosynthesis. In terms of biological role, glycosaminoglycan synthesis. The hyaluronic acid capsule is involved in the pathogenicity of group A Streptococci; it may be the major virulence determinant. In Streptococcus pyogenes serotype M3 (strain ATCC BAA-595 / MGAS315), this protein is Hyaluronan synthase (hasA).